The primary structure comprises 536 residues: Apolipoprotein N-acyltransferase (536 aa).

Helical transmembrane passes span proline 34–alanine 54, alanine 64–isoleucine 84, tyrosine 89–alanine 109, glycine 129–tryptophan 149, tyrosine 172–tryptophan 192, and histidine 199–glutamine 219. One can recognise a CN hydrolase domain in the interval leucine 244 to glycine 487. The active-site Proton acceptor is glutamate 283. Residue lysine 345 is part of the active site. Cysteine 395 functions as the Nucleophile in the catalytic mechanism. The chain crosses the membrane as a helical span at residues tryptophan 503–tryptophan 523.

It belongs to the CN hydrolase family. Apolipoprotein N-acyltransferase subfamily.

It is found in the cell inner membrane. The catalysed reaction is N-terminal S-1,2-diacyl-sn-glyceryl-L-cysteinyl-[lipoprotein] + a glycerophospholipid = N-acyl-S-1,2-diacyl-sn-glyceryl-L-cysteinyl-[lipoprotein] + a 2-acyl-sn-glycero-3-phospholipid + H(+). Its pathway is protein modification; lipoprotein biosynthesis (N-acyl transfer). In terms of biological role, catalyzes the phospholipid dependent N-acylation of the N-terminal cysteine of apolipoprotein, the last step in lipoprotein maturation. In Verminephrobacter eiseniae (strain EF01-2), this protein is Apolipoprotein N-acyltransferase.